We begin with the raw amino-acid sequence, 200 residues long: 3-isopropylmalate dehydratase small subunit (200 aa).

The protein belongs to the LeuD family. LeuD type 1 subfamily. In terms of assembly, heterodimer of LeuC and LeuD.

The catalysed reaction is (2R,3S)-3-isopropylmalate = (2S)-2-isopropylmalate. Its pathway is amino-acid biosynthesis; L-leucine biosynthesis; L-leucine from 3-methyl-2-oxobutanoate: step 2/4. In terms of biological role, catalyzes the isomerization between 2-isopropylmalate and 3-isopropylmalate, via the formation of 2-isopropylmaleate. This is 3-isopropylmalate dehydratase small subunit from Saccharopolyspora erythraea (strain ATCC 11635 / DSM 40517 / JCM 4748 / NBRC 13426 / NCIMB 8594 / NRRL 2338).